Reading from the N-terminus, the 154-residue chain is uncharacterized protein (154 aa).

Disordered stretches follow at residues 23 to 63 (ERVG…VVLK) and 79 to 154 (IKAA…DENE). The segment covering 43–56 (PDEDGDHSDKEDEQ) has biased composition (acidic residues). At Ser-50 the chain carries Phosphoserine. Residue Lys-108 is modified to N6-acetyllysine. Phosphoserine is present on Ser-146.

This is an uncharacterized protein from Homo sapiens (Human).